Consider the following 477-residue polypeptide: Ribulose bisphosphate carboxylase large chain (477 aa).

Residues 1–2 (MS) constitute a propeptide that is removed on maturation. Pro3 carries the post-translational modification N-acetylproline. N6,N6,N6-trimethyllysine is present on Lys14. Substrate is bound by residues Asn123 and Thr173. Lys175 (proton acceptor) is an active-site residue. Position 177 (Lys177) interacts with substrate. 3 residues coordinate Mg(2+): Lys201, Asp203, and Glu204. Lys201 is subject to N6-carboxylysine. His294 (proton acceptor) is an active-site residue. The substrate site is built by Arg295, His327, and Ser379.

The protein belongs to the RuBisCO large chain family. Type I subfamily. In terms of assembly, heterohexadecamer of 8 large chains and 8 small chains; disulfide-linked. The disulfide link is formed within the large subunit homodimers. Mg(2+) is required as a cofactor. In terms of processing, the disulfide bond which can form in the large chain dimeric partners within the hexadecamer appears to be associated with oxidative stress and protein turnover.

Its subcellular location is the plastid. It is found in the chloroplast. The catalysed reaction is 2 (2R)-3-phosphoglycerate + 2 H(+) = D-ribulose 1,5-bisphosphate + CO2 + H2O. It carries out the reaction D-ribulose 1,5-bisphosphate + O2 = 2-phosphoglycolate + (2R)-3-phosphoglycerate + 2 H(+). RuBisCO catalyzes two reactions: the carboxylation of D-ribulose 1,5-bisphosphate, the primary event in carbon dioxide fixation, as well as the oxidative fragmentation of the pentose substrate in the photorespiration process. Both reactions occur simultaneously and in competition at the same active site. This chain is Ribulose bisphosphate carboxylase large chain, found in Hyophorbe lagenicaulis (Bottle palm).